The primary structure comprises 94 residues: Co-chaperonin GroES (94 aa).

The protein belongs to the GroES chaperonin family. As to quaternary structure, heptamer of 7 subunits arranged in a ring. Interacts with the chaperonin GroEL.

Its subcellular location is the cytoplasm. Functionally, together with the chaperonin GroEL, plays an essential role in assisting protein folding. The GroEL-GroES system forms a nano-cage that allows encapsulation of the non-native substrate proteins and provides a physical environment optimized to promote and accelerate protein folding. GroES binds to the apical surface of the GroEL ring, thereby capping the opening of the GroEL channel. The protein is Co-chaperonin GroES of Acetivibrio thermocellus (strain ATCC 27405 / DSM 1237 / JCM 9322 / NBRC 103400 / NCIMB 10682 / NRRL B-4536 / VPI 7372) (Clostridium thermocellum).